Reading from the N-terminus, the 347-residue chain is E3 ubiquitin-protein ligase RNF146-B (347 aa).

The RING-type zinc-finger motif lies at 37–75 (CAICLQTCVHPVSLPCKHVFCYLCVKGASWLGKRCALCR). Glycyl lysine isopeptide (Lys-Gly) (interchain with G-Cter in ubiquitin) cross-links involve residues K85, K95, K131, and K176. A WWE domain is found at 92–168 (EELKAASRGN…EHGRRRKIKR (77 aa)). Disordered stretches follow at residues 196-241 (SSAD…GTSL) and 257-347 (ERSH…VTEV). Low complexity predominate over residues 203 to 217 (SVPAQSGASVQSSSV). Residues 282–296 (SIEETESDASSDSED) show a composition bias toward acidic residues. A phosphoserine mark is found at S288 and S292. The span at 304–322 (HSLTQQRLLVPNPSQTVSD) shows a compositional bias: polar residues.

In terms of assembly, interacts with poly-ADP-ribosylated AXIN1, AXIN2, BLZF1 and CASC3. Post-translationally, ubiquitinated; autoubiquitinated. Autoubiquitination is enhanced upon poly(ADP-ribose)-binding.

The protein resides in the cytoplasm. The protein localises to the cytosol. The enzyme catalyses S-ubiquitinyl-[E2 ubiquitin-conjugating enzyme]-L-cysteine + [acceptor protein]-L-lysine = [E2 ubiquitin-conjugating enzyme]-L-cysteine + N(6)-ubiquitinyl-[acceptor protein]-L-lysine.. Its pathway is protein modification; protein ubiquitination. Its function is as follows. E3 ubiquitin-protein ligase that specifically binds poly-ADP-ribosylated proteins and mediates their ubiquitination and subsequent degradation. Acts as an activator of the Wnt signaling pathway by mediating the ubiquitination of poly-ADP-ribosylated AXIN1 and AXIN2, 2 key components of the beta-catenin destruction complex. Acts in cooperation with tankyrase proteins (TNKS and TNKS2), which mediate poly-ADP-ribosylation of target proteins AXIN1, AXIN2, BLZF1, CASC3, TNKS and TNKS2. Recognizes and binds tankyrase-dependent poly-ADP-ribosylated proteins via its WWE domain and mediates their ubiquitination. This chain is E3 ubiquitin-protein ligase RNF146-B (RNF146B), found in Bos taurus (Bovine).